A 210-amino-acid chain; its full sequence is Protein SgcE (210 aa).

S6 contributes to the substrate binding site. 3 residues coordinate a divalent metal cation: H31, D33, and H64. D33 serves as the catalytic Proton acceptor. Substrate contacts are provided by residues H64, 140-143 (DGQG), 169-171 (DGG), and 191-192 (GR). D169 lines the a divalent metal cation pocket. The active-site Proton donor is the D169.

This sequence belongs to the ribulose-phosphate 3-epimerase family. The cofactor is Co(2+). Fe(2+) serves as cofactor. Requires Mn(2+) as cofactor. Zn(2+) is required as a cofactor.

It functions in the pathway carbohydrate degradation. Its function is as follows. Probable pentose-5-phosphate 3-epimerase. This Escherichia coli (strain K12) protein is Protein SgcE (sgcE).